We begin with the raw amino-acid sequence, 658 residues long: Ubiquilin-3 (658 aa).

One can recognise a Ubiquitin-like domain in the interval 22 to 96 (IRVTVKTPKD…VHLVIKMQRR (75 aa)). Residues 194 to 233 (NPHMQHLIQQNPEIGHILNNPEIMRQTMEFLRNPSMMQEM) form the STI1 domain. The segment covering 280 to 291 (TATTASTTTTSS) has biased composition (low complexity). 2 disordered regions span residues 280–336 (TATT…RNRL) and 362–478 (YLQG…PESP). Residues 312–323 (VSGGRQGRGGRQ) show a composition bias toward gly residues. 3 stretches are compositionally biased toward polar residues: residues 362 to 379 (YLQG…SPLS), 389 to 400 (SSPKSGSGQSLP), and 438 to 469 (TGPS…SLMS). The region spanning 614–658 (QLEAHFRVQLEQLRAMGFLNLEANLQALIATEGDVDAAVEKLRKS) is the UBA domain.

Testis-specific (at protein level).

The chain is Ubiquilin-3 (Ubqln3) from Mus musculus (Mouse).